Here is a 202-residue protein sequence, read N- to C-terminus: Molybdenum cofactor guanylyltransferase (202 aa).

GTP-binding positions include 9–11 (LAG), K22, D70, and D96. D96 contacts Mg(2+).

Belongs to the MobA family. As to quaternary structure, monomer. It depends on Mg(2+) as a cofactor.

The protein localises to the cytoplasm. It catalyses the reaction Mo-molybdopterin + GTP + H(+) = Mo-molybdopterin guanine dinucleotide + diphosphate. Its function is as follows. Transfers a GMP moiety from GTP to Mo-molybdopterin (Mo-MPT) cofactor (Moco or molybdenum cofactor) to form Mo-molybdopterin guanine dinucleotide (Mo-MGD) cofactor. The chain is Molybdenum cofactor guanylyltransferase from Desulfosudis oleivorans (strain DSM 6200 / JCM 39069 / Hxd3) (Desulfococcus oleovorans).